Consider the following 555-residue polypeptide: Glucose-6-phosphate isomerase (555 aa).

The active-site Proton donor is the E353. Active-site residues include H384 and K516.

This sequence belongs to the GPI family.

The protein localises to the cytoplasm. It catalyses the reaction alpha-D-glucose 6-phosphate = beta-D-fructose 6-phosphate. Its pathway is carbohydrate biosynthesis; gluconeogenesis. It functions in the pathway carbohydrate degradation; glycolysis; D-glyceraldehyde 3-phosphate and glycerone phosphate from D-glucose: step 2/4. Catalyzes the reversible isomerization of glucose-6-phosphate to fructose-6-phosphate. In Methylobacillus flagellatus (strain ATCC 51484 / DSM 6875 / VKM B-1610 / KT), this protein is Glucose-6-phosphate isomerase.